A 300-amino-acid polypeptide reads, in one-letter code: 2-keto-3-deoxy-L-fuconate dehydrogenase (300 aa).

NAD(+) contacts are provided by residues 63–90 (LITAAGAGIGRESALACARAGAHVIATD) and Asp112. Substrate is bound at residue Arg198. Tyr201 acts as the Proton acceptor in catalysis. NAD(+)-binding positions include Lys205 and 234-238 (IKTPS). Residues Arg242 and Arg260 each contribute to the substrate site.

The protein belongs to the short-chain dehydrogenases/reductases (SDR) family.

Its function is as follows. Plays a role in the catabolism of L-fucose. Catalyzes the NAD(+)-dependent oxidation of 2-keo-3-deoxy-L-fuconate to 2,4-diketo-3-deoxy-L-fuconate. This Xanthomonas campestris pv. campestris (strain ATCC 33913 / DSM 3586 / NCPPB 528 / LMG 568 / P 25) protein is 2-keto-3-deoxy-L-fuconate dehydrogenase.